The chain runs to 272 residues: 3-methyl-2-oxobutanoate hydroxymethyltransferase (272 aa).

Asp-51 and Asp-90 together coordinate Mg(2+). 3-methyl-2-oxobutanoate contacts are provided by residues 51-52 (DS), Asp-90, and Lys-118. Residue Glu-120 participates in Mg(2+) binding. Glu-187 functions as the Proton acceptor in the catalytic mechanism.

Belongs to the PanB family. As to quaternary structure, homodecamer; pentamer of dimers. The cofactor is Mg(2+).

Its subcellular location is the cytoplasm. It catalyses the reaction 3-methyl-2-oxobutanoate + (6R)-5,10-methylene-5,6,7,8-tetrahydrofolate + H2O = 2-dehydropantoate + (6S)-5,6,7,8-tetrahydrofolate. The protein operates within cofactor biosynthesis; (R)-pantothenate biosynthesis; (R)-pantoate from 3-methyl-2-oxobutanoate: step 1/2. In terms of biological role, catalyzes the reversible reaction in which hydroxymethyl group from 5,10-methylenetetrahydrofolate is transferred onto alpha-ketoisovalerate to form ketopantoate. This is 3-methyl-2-oxobutanoate hydroxymethyltransferase from Xylella fastidiosa (strain M12).